Here is a 465-residue protein sequence, read N- to C-terminus: Eukaryotic translation initiation factor 3 subunit M (465 aa).

Positions 215 to 383 constitute a PCI domain; it reads EEMSYNHVIL…GEFLVHRATY (169 aa). Positions 429-465 are disordered; it reads AAAESGREGGARGGAGERRRGGGGHQGPREVDLVGGD. 2 stretches are compositionally biased toward basic and acidic residues: residues 433–448 and 455–465; these read SGREGGARGGAGERRR and GPREVDLVGGD.

Belongs to the eIF-3 subunit M family. In terms of assembly, component of the eukaryotic translation initiation factor 3 (eIF-3) complex.

The protein localises to the cytoplasm. Component of the eukaryotic translation initiation factor 3 (eIF-3) complex, which is involved in protein synthesis of a specialized repertoire of mRNAs and, together with other initiation factors, stimulates binding of mRNA and methionyl-tRNAi to the 40S ribosome. The eIF-3 complex specifically targets and initiates translation of a subset of mRNAs involved in cell proliferation. The sequence is that of Eukaryotic translation initiation factor 3 subunit M from Coccidioides immitis (strain RS) (Valley fever fungus).